Reading from the N-terminus, the 574-residue chain is Craniofacial development protein 2 (574 aa).

5 stretches are compositionally biased toward basic and acidic residues: residues 1–16 (MEEV…KAED), 23–37 (ECHE…KEDE), 45–55 (EQTKGIKRKAE), 86–111 (SEKE…KEDE), and 134–172 (TGEE…DRQQ). 2 disordered regions span residues 1–222 (MEEV…PAVD) and 488–574 (TRPF…SGVF). The span at 199-208 (KTGTNASSKN) shows a compositional bias: polar residues. The tract at residues 493 to 572 (GTNEADDTSE…AVPSLPAGSG (80 aa)) is hydrophilic. The span at 502–516 (EESKPSSEQKGKEKP) shows a compositional bias: basic and acidic residues. Low complexity predominate over residues 518 to 528 (ASVPSAVSSVP).

It is found in the cytoplasm. The protein resides in the nucleus. The sequence is that of Craniofacial development protein 2 (CFDP2) from Tragulus javanicus (Lesser Malay chevrotain).